The sequence spans 273 residues: Shikimate dehydrogenase (NADP(+)) (273 aa).

Residues 15 to 17 and Thr62 each bind shikimate; that span reads SKS. The active-site Proton acceptor is the Lys66. An NADP(+)-binding site is contributed by Glu78. Positions 87 and 103 each coordinate shikimate. NADP(+) is bound by residues 127–131, 151–156, and Met214; these read GAGGA and NRTHDK. Position 216 (Tyr216) interacts with shikimate. Gly238 provides a ligand contact to NADP(+).

It belongs to the shikimate dehydrogenase family. Homodimer.

It catalyses the reaction shikimate + NADP(+) = 3-dehydroshikimate + NADPH + H(+). The protein operates within metabolic intermediate biosynthesis; chorismate biosynthesis; chorismate from D-erythrose 4-phosphate and phosphoenolpyruvate: step 4/7. In terms of biological role, involved in the biosynthesis of the chorismate, which leads to the biosynthesis of aromatic amino acids. Catalyzes the reversible NADPH linked reduction of 3-dehydroshikimate (DHSA) to yield shikimate (SA). This chain is Shikimate dehydrogenase (NADP(+)), found in Shewanella denitrificans (strain OS217 / ATCC BAA-1090 / DSM 15013).